A 578-amino-acid chain; its full sequence is Probable arginine--tRNA ligase, mitochondrial (578 aa).

The transit peptide at 1 to 16 (MACGFRRAIACQLSRV) directs the protein to the mitochondrion. Residues 133–135 (SPN), His-144, Tyr-322, Asp-326, and Gln-350 each bind L-arginine. A 'HIGH' region motif is present at residues 133-144 (SPNVAKKFHVGH). Lys-568 bears the N6-acetyllysine mark.

This sequence belongs to the class-I aminoacyl-tRNA synthetase family.

Its subcellular location is the mitochondrion membrane. It carries out the reaction tRNA(Arg) + L-arginine + ATP = L-arginyl-tRNA(Arg) + AMP + diphosphate. Functionally, catalyzes the attachment of arginine to tRNA(Arg) in a two-step reaction: arginine is first activated by ATP to form Arg-AMP and then transferred to the acceptor end of tRNA(Arg). The sequence is that of Probable arginine--tRNA ligase, mitochondrial (RARS2) from Pongo abelii (Sumatran orangutan).